Consider the following 310-residue polypeptide: Tyrosine recombinase XerC (310 aa).

In terms of domain architecture, Core-binding (CB) spans 1-92 (MDELIKEFDR…SLRAFFKYLH (92 aa)). Residues 113–300 (YIPAVLSVDE…SVNRLMAVYD (188 aa)) form the Tyr recombinase domain. Active-site residues include Arg153, Lys177, His252, Arg255, and His278. Tyr287 acts as the O-(3'-phospho-DNA)-tyrosine intermediate in catalysis.

The protein belongs to the 'phage' integrase family. XerC subfamily. As to quaternary structure, forms a cyclic heterotetrameric complex composed of two molecules of XerC and two molecules of XerD.

It is found in the cytoplasm. Site-specific tyrosine recombinase, which acts by catalyzing the cutting and rejoining of the recombining DNA molecules. The XerC-XerD complex is essential to convert dimers of the bacterial chromosome into monomers to permit their segregation at cell division. It also contributes to the segregational stability of plasmids. This is Tyrosine recombinase XerC from Syntrophus aciditrophicus (strain SB).